A 303-amino-acid polypeptide reads, in one-letter code: MNSIYRLSQLKQLEAESIHIFRDAISQFENPVLLYSIGKDSSVLVHLAKKAFYPGRLPFKLLHIDSTFKFREMIEFRDRFVQENDLDLIVHSNQEGISAGVNPFTYGSRKYTDIMKTQALIQALTAGKYDAVFGGARRDEEKSRAKERIFSFRDKFNQWDPKNQRPELWNIYNGRINPGESVRIFPLSNWTELDIWQYIRLEKIQVVDLYFARPRPIVERDGSLIMADDDRLPLKPGETPQMRTVRFRTLGCYPLTGAIESTARTVEEIVAEMLETRLSERSSRIIDHDGDASMEQKKREGYF.

It belongs to the PAPS reductase family. CysD subfamily. In terms of assembly, heterodimer composed of CysD, the smaller subunit, and CysN.

The enzyme catalyses sulfate + ATP + H(+) = adenosine 5'-phosphosulfate + diphosphate. Its pathway is sulfur metabolism; hydrogen sulfide biosynthesis; sulfite from sulfate: step 1/3. In terms of biological role, with CysN forms the ATP sulfurylase (ATPS) that catalyzes the adenylation of sulfate producing adenosine 5'-phosphosulfate (APS) and diphosphate, the first enzymatic step in sulfur assimilation pathway. APS synthesis involves the formation of a high-energy phosphoric-sulfuric acid anhydride bond driven by GTP hydrolysis by CysN coupled to ATP hydrolysis by CysD. In Akkermansia muciniphila (strain ATCC BAA-835 / DSM 22959 / JCM 33894 / BCRC 81048 / CCUG 64013 / CIP 107961 / Muc), this protein is Sulfate adenylyltransferase subunit 2.